The primary structure comprises 342 residues: Glycerol-3-phosphate dehydrogenase [NAD(P)+] (342 aa).

3 residues coordinate NADPH: tryptophan 11, arginine 33, and lysine 107. Lysine 107, glycine 143, and serine 145 together coordinate sn-glycerol 3-phosphate. NADPH is bound at residue alanine 147. Sn-glycerol 3-phosphate-binding residues include lysine 198, aspartate 251, serine 261, arginine 262, and asparagine 263. Lysine 198 serves as the catalytic Proton acceptor. Arginine 262 lines the NADPH pocket. Positions 286 and 288 each coordinate NADPH.

The protein belongs to the NAD-dependent glycerol-3-phosphate dehydrogenase family.

Its subcellular location is the cytoplasm. It catalyses the reaction sn-glycerol 3-phosphate + NAD(+) = dihydroxyacetone phosphate + NADH + H(+). The catalysed reaction is sn-glycerol 3-phosphate + NADP(+) = dihydroxyacetone phosphate + NADPH + H(+). Its pathway is membrane lipid metabolism; glycerophospholipid metabolism. Catalyzes the reduction of the glycolytic intermediate dihydroxyacetone phosphate (DHAP) to sn-glycerol 3-phosphate (G3P), the key precursor for phospholipid synthesis. This Paracidovorax citrulli (strain AAC00-1) (Acidovorax citrulli) protein is Glycerol-3-phosphate dehydrogenase [NAD(P)+].